The following is a 193-amino-acid chain: Crossover junction endodeoxyribonuclease RuvC (193 aa).

Residues Asp7, Glu68, and Asp141 contribute to the active site. Residues Asp7, Glu68, and Asp141 each contribute to the Mg(2+) site.

The protein belongs to the RuvC family. Homodimer which binds Holliday junction (HJ) DNA. The HJ becomes 2-fold symmetrical on binding to RuvC with unstacked arms; it has a different conformation from HJ DNA in complex with RuvA. In the full resolvosome a probable DNA-RuvA(4)-RuvB(12)-RuvC(2) complex forms which resolves the HJ. Mg(2+) is required as a cofactor.

It localises to the cytoplasm. The enzyme catalyses Endonucleolytic cleavage at a junction such as a reciprocal single-stranded crossover between two homologous DNA duplexes (Holliday junction).. In terms of biological role, the RuvA-RuvB-RuvC complex processes Holliday junction (HJ) DNA during genetic recombination and DNA repair. Endonuclease that resolves HJ intermediates. Cleaves cruciform DNA by making single-stranded nicks across the HJ at symmetrical positions within the homologous arms, yielding a 5'-phosphate and a 3'-hydroxyl group; requires a central core of homology in the junction. The consensus cleavage sequence is 5'-(A/T)TT(C/G)-3'. Cleavage occurs on the 3'-side of the TT dinucleotide at the point of strand exchange. HJ branch migration catalyzed by RuvA-RuvB allows RuvC to scan DNA until it finds its consensus sequence, where it cleaves and resolves the cruciform DNA. The polypeptide is Crossover junction endodeoxyribonuclease RuvC (Renibacterium salmoninarum (strain ATCC 33209 / DSM 20767 / JCM 11484 / NBRC 15589 / NCIMB 2235)).